A 498-amino-acid chain; its full sequence is ATP synthase subunit beta, chloroplastic (498 aa).

172–179 (GGAGVGKT) serves as a coordination point for ATP.

This sequence belongs to the ATPase alpha/beta chains family. In terms of assembly, F-type ATPases have 2 components, CF(1) - the catalytic core - and CF(0) - the membrane proton channel. CF(1) has five subunits: alpha(3), beta(3), gamma(1), delta(1), epsilon(1). CF(0) has four main subunits: a(1), b(1), b'(1) and c(9-12).

It is found in the plastid. Its subcellular location is the chloroplast thylakoid membrane. The enzyme catalyses ATP + H2O + 4 H(+)(in) = ADP + phosphate + 5 H(+)(out). Produces ATP from ADP in the presence of a proton gradient across the membrane. The catalytic sites are hosted primarily by the beta subunits. This chain is ATP synthase subunit beta, chloroplastic, found in Magnolia tripetala (Umbrella-tree).